The chain runs to 178 residues: Translation initiation factor IF-3 (178 aa).

Positions 1–20 are disordered; the sequence is MRRPFKTDAPVKDGPRSNRE.

It belongs to the IF-3 family. As to quaternary structure, monomer.

The protein localises to the cytoplasm. IF-3 binds to the 30S ribosomal subunit and shifts the equilibrium between 70S ribosomes and their 50S and 30S subunits in favor of the free subunits, thus enhancing the availability of 30S subunits on which protein synthesis initiation begins. This Rhizobium leguminosarum bv. trifolii (strain WSM2304) protein is Translation initiation factor IF-3.